The chain runs to 439 residues: Ribosomal protein uS12 methylthiotransferase RimO (439 aa).

In terms of domain architecture, MTTase N-terminal spans lysine 7–asparagine 119. Cysteine 16, cysteine 50, cysteine 82, cysteine 151, cysteine 155, and cysteine 158 together coordinate [4Fe-4S] cluster. The Radical SAM core domain maps to threonine 137–lysine 368.

It belongs to the methylthiotransferase family. RimO subfamily. The cofactor is [4Fe-4S] cluster.

It is found in the cytoplasm. It carries out the reaction L-aspartate(89)-[ribosomal protein uS12]-hydrogen + (sulfur carrier)-SH + AH2 + 2 S-adenosyl-L-methionine = 3-methylsulfanyl-L-aspartate(89)-[ribosomal protein uS12]-hydrogen + (sulfur carrier)-H + 5'-deoxyadenosine + L-methionine + A + S-adenosyl-L-homocysteine + 2 H(+). In terms of biological role, catalyzes the methylthiolation of an aspartic acid residue of ribosomal protein uS12. This is Ribosomal protein uS12 methylthiotransferase RimO from Helicobacter pylori (strain HPAG1).